Consider the following 138-residue polypeptide: Acidic phospholipase A2 RV-7 (138 aa).

Positions 1–16 are cleaved as a signal peptide; the sequence is MRTLWIVAVCLIGVEG. 7 disulfides stabilise this stretch: C42/C131, C44/C60, C59/C111, C65/C138, C66/C104, C73/C97, and C91/C102. 3 residues coordinate Ca(2+): Y43, G45, and G47. The active site involves H63. D64 contributes to the Ca(2+) binding site. The active site involves D105.

It belongs to the phospholipase A2 family. Group II subfamily. D49 sub-subfamily. As to quaternary structure, heterodimer of a weakly toxic basic protein having phospholipase A2 activity (RV-4) and a non-toxic acidic protein which inhibits its enzymatic activity but potentiates its lethal potency and neurotoxicity (RV-7). The cofactor is Ca(2+). Expressed by the venom gland.

It is found in the secreted. The enzyme catalyses a 1,2-diacyl-sn-glycero-3-phosphocholine + H2O = a 1-acyl-sn-glycero-3-phosphocholine + a fatty acid + H(+). Heterodimer: RV-4/RV-7 targets the presynaptic sites of the neuromuscular junction. Its function is as follows. Monomer: snake venom phospholipase A2 (PLA2) RV-7 that has low enzymatic activity and is not toxic. It inhibits the enzymatic activity of RV-4 in vitro but potentiates its lethal potency and neurotoxicity. It may facilitate the specific binding of RV-4 to its presynaptic binding sites, probably by acting as a chaperone, minimizing distraction and destruction of RV-4 en route to the site of action by reducing non-specific binding to muscle and other organs. PLA2 catalyzes the calcium-dependent hydrolysis of the 2-acyl groups in 3-sn-phosphoglycerides. The protein is Acidic phospholipase A2 RV-7 of Daboia siamensis (Eastern Russel's viper).